Reading from the N-terminus, the 466-residue chain is Light-independent protochlorophyllide reductase subunit N (466 aa).

Cys23, Cys48, and Cys108 together coordinate [4Fe-4S] cluster.

It belongs to the BchN/ChlN family. Protochlorophyllide reductase is composed of three subunits; ChlL, ChlN and ChlB. Forms a heterotetramer of two ChlB and two ChlN subunits. [4Fe-4S] cluster is required as a cofactor.

The catalysed reaction is chlorophyllide a + oxidized 2[4Fe-4S]-[ferredoxin] + 2 ADP + 2 phosphate = protochlorophyllide a + reduced 2[4Fe-4S]-[ferredoxin] + 2 ATP + 2 H2O. It functions in the pathway porphyrin-containing compound metabolism; chlorophyll biosynthesis (light-independent). Its function is as follows. Component of the dark-operative protochlorophyllide reductase (DPOR) that uses Mg-ATP and reduced ferredoxin to reduce ring D of protochlorophyllide (Pchlide) to form chlorophyllide a (Chlide). This reaction is light-independent. The NB-protein (ChlN-ChlB) is the catalytic component of the complex. In Synechococcus elongatus (strain ATCC 33912 / PCC 7942 / FACHB-805) (Anacystis nidulans R2), this protein is Light-independent protochlorophyllide reductase subunit N.